The primary structure comprises 375 residues: Trichodiene synthase (375 aa).

The protein belongs to the trichodiene synthase family.

It carries out the reaction (2E,6E)-farnesyl diphosphate = trichodiene + diphosphate. The protein operates within sesquiterpene biosynthesis; trichothecene biosynthesis. In terms of biological role, TS is a member of the terpene cyclase group of enzymes. It catalyzes the isomerization and cyclization of farnesyl pyro-phosphate to form trichodiene, the first cyclic intermediate in the biosynthetic pathway for trichothecenes. It serves to branch trichothecene biosynthesis from the isoprenoid pathway. This Fusarium boothii protein is Trichodiene synthase (TRI5).